We begin with the raw amino-acid sequence, 327 residues long: Phenylalanine--tRNA ligase alpha subunit (327 aa).

Mg(2+) is bound at residue Glu252.

It belongs to the class-II aminoacyl-tRNA synthetase family. Phe-tRNA synthetase alpha subunit type 1 subfamily. Tetramer of two alpha and two beta subunits. The cofactor is Mg(2+).

The protein localises to the cytoplasm. The enzyme catalyses tRNA(Phe) + L-phenylalanine + ATP = L-phenylalanyl-tRNA(Phe) + AMP + diphosphate + H(+). The polypeptide is Phenylalanine--tRNA ligase alpha subunit (Escherichia coli O127:H6 (strain E2348/69 / EPEC)).